We begin with the raw amino-acid sequence, 345 residues long: MSNMMKALVKAKPEVGLWMENVPVPEVGPNDVLIRVKKSAICGTDVHIWNWDQWAQKTIPVPMVVGHEFSGEIAEIGSAVTRYHVGERVSGEGHIVCGKCRNCRAGRGHLCRNTLGVGVNRPGSFGEFVCIPESNVVPIPDDISDEIAAIFDPFGNAVHTALSFDLVGEDVLVTGAGPIGIMGALVAKRSGARKVVITDINPHRLELARKLGIDHVVDASKENLADVMKAIGMTEGFDVGLEMSGAAPAFRDMIDKMNNGGKIAILGIAPAGFEIDWNKVIFKMLNLKGIYGREMFETWYKMIAFVQGGLDLAPIITHRIGIDDFRDGFEAMRSGNSGKVVMDWM.

A Zn(2+)-binding site is contributed by C42. Active-site charge relay system residues include T44 and H47. Zn(2+) is bound by residues H67, E68, C97, C100, C103, and C111. NAD(+) is bound by residues I179, D199, R204, 266-268 (LGI), and 290-291 (IY).

Belongs to the zinc-containing alcohol dehydrogenase family. In terms of assembly, homotetramer. The cofactor is Zn(2+).

The protein localises to the cytoplasm. The catalysed reaction is L-threonine + NAD(+) = (2S)-2-amino-3-oxobutanoate + NADH + H(+). The protein operates within amino-acid degradation; L-threonine degradation via oxydo-reductase pathway; glycine from L-threonine: step 1/2. Functionally, catalyzes the NAD(+)-dependent oxidation of L-threonine to 2-amino-3-ketobutyrate. The sequence is that of L-threonine 3-dehydrogenase from Rhizobium johnstonii (strain DSM 114642 / LMG 32736 / 3841) (Rhizobium leguminosarum bv. viciae).